The primary structure comprises 419 residues: Histidine--tRNA ligase (419 aa).

This sequence belongs to the class-II aminoacyl-tRNA synthetase family. Homodimer.

It localises to the cytoplasm. The enzyme catalyses tRNA(His) + L-histidine + ATP = L-histidyl-tRNA(His) + AMP + diphosphate + H(+). The sequence is that of Histidine--tRNA ligase from Thermosipho melanesiensis (strain DSM 12029 / CIP 104789 / BI429).